Consider the following 231-residue polypeptide: NADH-ubiquinone oxidoreductase chain 4 (231 aa).

A run of 6 helical transmembrane segments spans residues 1–21 (PIAG…YGII), 34–54 (MFLP…LTCL), 63–85 (IAYS…TPWG), 89–111 (AMTL…NTTY), 128–148 (ILPM…AIPP), and 156–176 (LLIM…LGLS).

The protein belongs to the complex I subunit 4 family.

Its subcellular location is the mitochondrion membrane. The catalysed reaction is a ubiquinone + NADH + 5 H(+)(in) = a ubiquinol + NAD(+) + 4 H(+)(out). Its function is as follows. Core subunit of the mitochondrial membrane respiratory chain NADH dehydrogenase (Complex I) that is believed to belong to the minimal assembly required for catalysis. Complex I functions in the transfer of electrons from NADH to the respiratory chain. The immediate electron acceptor for the enzyme is believed to be ubiquinone. This Gloydius intermedius (Central Asian pit viper) protein is NADH-ubiquinone oxidoreductase chain 4 (MT-ND4).